The chain runs to 221 residues: NSEVKYSTVQNWYSGDENGKGGIYNFVTKRGLCAESNSKISWTQVETGSAITWKYPSCILAGNNSKGEFYSVALTNHYQQADTGSKMIHIGKNSRSKIISKGISTGNSINSYRGKVKVSLNASRARNYSQCDSLLIGNSSEANTFPYIEVYNRSSIIEHEASISKINEEKLFYFMQRGISIEEAISLIVSGFCKEVFTELPLEFALEADKLLGLKLEGSVG.

Belongs to the iron-sulfur cluster assembly SufBD family.

Its subcellular location is the plastid. The protein resides in the chloroplast. In Galdieria sulphuraria (Red alga), this protein is Iron-sulfur cluster assembly SufBD family protein ycf24 (ycf24).